The chain runs to 327 residues: tRNA N6-adenosine threonylcarbamoyltransferase (327 aa).

Positions 107 and 111 each coordinate Fe cation. Residues 129-133, D162, G175, and N263 contribute to the substrate site; that span reads LVSGG. D291 is a Fe cation binding site.

Belongs to the KAE1 / TsaD family. Requires Fe(2+) as cofactor.

It is found in the cytoplasm. It carries out the reaction L-threonylcarbamoyladenylate + adenosine(37) in tRNA = N(6)-L-threonylcarbamoyladenosine(37) in tRNA + AMP + H(+). In terms of biological role, required for the formation of a threonylcarbamoyl group on adenosine at position 37 (t(6)A37) in tRNAs that read codons beginning with adenine. Is involved in the transfer of the threonylcarbamoyl moiety of threonylcarbamoyl-AMP (TC-AMP) to the N6 group of A37, together with TsaE and TsaB. TsaD likely plays a direct catalytic role in this reaction. This chain is tRNA N6-adenosine threonylcarbamoyltransferase, found in Nautilia profundicola (strain ATCC BAA-1463 / DSM 18972 / AmH).